The primary structure comprises 127 residues: ALK and LTK ligand 1 (127 aa).

Residues 1 to 27 form the signal peptide; that stretch reads MWLTKPSTPVSALLLLALALSPPGTQG. Cystine bridges form between Cys88–Cys124 and Cys102–Cys111.

It belongs to the ALKAL family.

It localises to the secreted. The protein resides in the cell membrane. Cytokine that acts as a physiological ligand for receptor tyrosine kinase LTK, leading to its activation. Monomeric ALKAL1 binds to LTK, leading to LTK homodimerization and activation. In contrast to ALKAL2, does not act as a potent physiological ligand for ALK. This Mus musculus (Mouse) protein is ALK and LTK ligand 1.